The sequence spans 60 residues: Snake venom metalloproteinase bothrojaractivase (60 aa).

The 60-residue stretch at 1–60 (RYIELAVVADHGMFTKYRVHELVNTVNGFFRSKQDLIKVQKDKTLTSFGEWRERDLLPRI) folds into the Peptidase M12B domain. Glutamate 4 is a binding site for Ca(2+).

The protein belongs to the venom metalloproteinase (M12B) family. P-I subfamily. In terms of assembly, monomer. It depends on Zn(2+) as a cofactor. As to expression, expressed by the venom gland.

Its subcellular location is the secreted. With respect to regulation, completely inhibited by EDTA and EGTA. Partially inhibited by serine proteinase inhibitors PMSF and benzamidine. Not inhibited by cysteine proteinase inhibitors mercury ions and E-64. Is active without cofactors, although the presence of low concentrations of calcium and zinc ions enhanced its ability to convert prothrombin (F2) into active thrombin. Its function is as follows. Prothrombin (F2) activator that is cofactor-independent. Also has fibrinolytic and fibrinogenolytic activity. It degrades the Aalpha-chain and more slowly the Bbeta-chain of fibrin and fibrinogen, while the gamma-chain is only partially and slowly affected. A dose-dependent procoagulant activity is shown in human plasma. The sequence is that of Snake venom metalloproteinase bothrojaractivase from Bothrops jararaca (Jararaca).